Reading from the N-terminus, the 447-residue chain is MEIEKIQETIRMIADENLDVRTITMGISLLDCIDSDSDRACQKIYDKITTKAQDLVKVGRQIEAEFGLPIVNKRVTVTPIALIAAASGDADYVKYAKTLDRAAHAVGIDFIGGFSALTQKGYQSGDRVLINSLPQALAETELVCASVNVGSTRSGINMDAVKDMGTVIKRASELDLMANAKLVVFCNAVEDNPFMAGGFHGVSEPDVVINAGVSGPGVVKAALEKVKGQPMDVVAETIKQTAFKVTRMGQLVGTIAAQRLGVPFGIVDLSLAPTPAIGDSVAQILEEIGLEQVGTHGTTAALAMLNDAVKKGGIMACSHVGGLSGAFIPVSEDAGMIDAVNAHTLSLDKLEAMTAVCSVGLDMIAIPGDTPAETISAMIADEAAIGMINNKTTAVRVIPVAGKQVGETVEFGGLLGHAPIMGVNKASSAAMIHRGGQLPAPVHSFKN.

The protein belongs to the UPF0210 family. In terms of assembly, homodimer.

The chain is UPF0210 protein LAF_0976 from Limosilactobacillus fermentum (strain NBRC 3956 / LMG 18251) (Lactobacillus fermentum).